We begin with the raw amino-acid sequence, 540 residues long: Keratin, type II cytoskeletal 73 (540 aa).

The head stretch occupies residues 1–131 (MSRQFTYKSG…DPEIQKVRAQ (131 aa)). Residues 132 to 167 (EREQIKVLNNKFASFIDKVRFLEQQNQVLETKWELL) form a coil 1A region. The 314-residue stretch at 132 to 445 (EREQIKVLNN…KLLEGEECRM (314 aa)) folds into the IF rod domain. A linker 1 region spans residues 168–186 (QQLDLNNCKNNLEPILEGY). The interval 187–278 (ISNLRKQLET…CLYEGETAQI (92 aa)) is coil 1B. Residues 279-302 (QSHISDTSIILSMDNNRNLDLDSI) are linker 12. The interval 303–441 (IAEVRAQYEE…ATYRKLLEGE (139 aa)) is coil 2. The tail stretch occupies residues 442–540 (ECRMSGEYTN…LSSPTKKTMR (99 aa)). A disordered region spans residues 502–540 (SGNCSPRGEARTRLGSASEFRDSQGKTLALSSPTKKTMR). The segment covering 526 to 540 (GKTLALSSPTKKTMR) has biased composition (polar residues).

The protein belongs to the intermediate filament family. As to quaternary structure, heterotetramer of two type I and two type II keratins. In terms of tissue distribution, highly expressed in hair follicles from scalp. In hair, it is specifically present in the inner root sheath (IRS) of the hair follicle. Present in the IRS cuticle, but not in Henle or Huxley layers of the IRS. In the IRS cuticle, it is expressed between the lowermost bulb region of the cuticle and the region where Henle cells undergo abrupt terminal differentiation. Detected up to the uppermost cortex region where cuticle cells terminally differentiate (at protein level).

In terms of biological role, has a role in hair formation. Specific component of keratin intermediate filaments in the inner root sheath (IRS) of the hair follicle. This is Keratin, type II cytoskeletal 73 (KRT73) from Homo sapiens (Human).